The sequence spans 208 residues: Interleukin-6 (208 aa).

Positions 1 to 27 (MTFLSTSAFSPLAFSLGLLLVVATAFP) are cleaved as a signal peptide. C68 and C74 are joined by a disulfide. S77 is subject to Phosphoserine. C97 and C107 form a disulfide bridge.

Belongs to the IL-6 superfamily. As to quaternary structure, component of a hexamer of two molecules each of IL6, IL6R and IL6ST; first binds to IL6R to associate with the signaling subunit IL6ST. Interacts with IL6R (via the N-terminal ectodomain); this interaction may be affected by IL6R-binding with SORL1, hence decreasing IL6 cis signaling. Interacts with SORL1 (via the N-terminal ectodomain); this interaction leads to IL6 internalization and lysosomal degradation. May form a trimeric complex with the soluble SORL1 ectodomain and soluble IL6R receptor; this interaction might stabilize circulating IL6, hence promoting IL6 trans signaling.

Its subcellular location is the secreted. Its function is as follows. Cytokine with a wide variety of biological functions in immunity, tissue regeneration, and metabolism. Binds to IL6R, then the complex associates to the signaling subunit IL6ST/gp130 to trigger the intracellular IL6-signaling pathway. The interaction with the membrane-bound IL6R and IL6ST stimulates 'classic signaling', whereas the binding of IL6 and soluble IL6R to IL6ST stimulates 'trans-signaling'. Alternatively, 'cluster signaling' occurs when membrane-bound IL6:IL6R complexes on transmitter cells activate IL6ST receptors on neighboring receiver cells. IL6 is a potent inducer of the acute phase response. Rapid production of IL6 contributes to host defense during infection and tissue injury, but excessive IL6 synthesis is involved in disease pathology. In the innate immune response, is synthesized by myeloid cells, such as macrophages and dendritic cells, upon recognition of pathogens through toll-like receptors (TLRs) at the site of infection or tissue injury. In the adaptive immune response, is required for the differentiation of B cells into immunoglobulin-secreting cells. Plays a major role in the differentiation of CD4(+) T cell subsets. Essential factor for the development of T follicular helper (Tfh) cells that are required for the induction of germinal-center formation. Required to drive naive CD4(+) T cells to the Th17 lineage. Also required for proliferation of myeloma cells and the survival of plasmablast cells. In terms of biological role, acts as an essential factor in bone homeostasis and on vessels directly or indirectly by induction of VEGF, resulting in increased angiogenesis activity and vascular permeability. Induces, through 'trans-signaling' and synergistically with IL1B and TNF, the production of VEGF. Involved in metabolic controls, is discharged into the bloodstream after muscle contraction increasing lipolysis and improving insulin resistance. 'Trans-signaling' in central nervous system also regulates energy and glucose homeostasis. Mediates, through GLP-1, crosstalk between insulin-sensitive tissues, intestinal L cells and pancreatic islets to adapt to changes in insulin demand. Also acts as a myokine. Plays a protective role during liver injury, being required for maintenance of tissue regeneration. Also has a pivotal role in iron metabolism by regulating HAMP/hepcidin expression upon inflammation or bacterial infection. Through activation of IL6ST-YAP-NOTCH pathway, induces inflammation-induced epithelial regeneration. This Felis catus (Cat) protein is Interleukin-6 (IL6).